A 429-amino-acid polypeptide reads, in one-letter code: MSFYRSWIGEEGELIKRYTSSIKDDVEIAEEVIKVMEAHVKHLAEVGIMPKEAADAILKTLKEATPEQLLSSEFEDIHEALEKWLIDRLGEETAGWVGLGRSRNDHVAAAIRLAALRKASALRKNVEKMRCILAKKALEYADCAMPSFTHFQPAQAITFGHYLLAVDELAAEFLHVLKAVEKLLKRSPLGAGPAGGTRTPIDRERLAKLAGFEDVVENALYASGSRFFALALASAVVSFLTELSRTVDDLIRWNSPLVGYVAAPDSHVSTSSIMPHKRNLVTLEVFRARAAEALGHLTALNAVVMKIGLGYSLDLQEATRHLWAVLNMATEGVEIFIDFLEKMSFNCVKAREDAERYHSTSSDTAETIALSGVPFRKAYFQLAKEIKEGTARLMSIEEALQRPTRGSANPEEVKKAASTRLVFCREKPL.

Belongs to the lyase 1 family. Argininosuccinate lyase subfamily.

It localises to the cytoplasm. It carries out the reaction 2-(N(omega)-L-arginino)succinate = fumarate + L-arginine. Its pathway is amino-acid biosynthesis; L-arginine biosynthesis; L-arginine from L-ornithine and carbamoyl phosphate: step 3/3. The chain is Argininosuccinate lyase from Pyrobaculum islandicum (strain DSM 4184 / JCM 9189 / GEO3).